The following is a 209-amino-acid chain: Uracil phosphoribosyltransferase (209 aa).

5-phospho-alpha-D-ribose 1-diphosphate is bound by residues arginine 79, arginine 104, and 131–139; that span reads DPMLATGNS. Uracil-binding positions include isoleucine 194 and 199 to 201; that span reads GDA. Aspartate 200 serves as a coordination point for 5-phospho-alpha-D-ribose 1-diphosphate.

It belongs to the UPRTase family. Mg(2+) is required as a cofactor.

It carries out the reaction UMP + diphosphate = 5-phospho-alpha-D-ribose 1-diphosphate + uracil. It participates in pyrimidine metabolism; UMP biosynthesis via salvage pathway; UMP from uracil: step 1/1. Its activity is regulated as follows. Allosterically activated by GTP. Catalyzes the conversion of uracil and 5-phospho-alpha-D-ribose 1-diphosphate (PRPP) to UMP and diphosphate. This chain is Uracil phosphoribosyltransferase, found in Polaromonas naphthalenivorans (strain CJ2).